A 697-amino-acid polypeptide reads, in one-letter code: Phosphatase and actin regulator 4-B (697 aa).

Residues 42-67 form an RPEL 1 repeat; it reads EVLERKISMRKPREELVKRGLIVDVP. 2 disordered regions span residues 63 to 381 and 450 to 569; these read IVDV…LTLA and LKVP…SKDE. A compositionally biased stretch (basic and acidic residues) spans 189–202; sequence HVPEKTSEKYRPKS. 2 stretches are compositionally biased toward pro residues: residues 317 to 326 and 370 to 380; these read PSPPLPPKRA and APNPPVPPLTL. 3 stretches are compositionally biased toward acidic residues: residues 454 to 469, 501 to 514, and 522 to 532; these read DDDD…DESL, QEED…DTDS, and EEDEDEEEEET. RPEL repeat units follow at residues 579–604 and 616–641; these read TQLN…QKNE and RRLT…RFNE.

Belongs to the phosphatase and actin regulator family. As to quaternary structure, binds ppp1ca and actin.

It is found in the cytoplasm. Its subcellular location is the cell projection. The protein localises to the lamellipodium. Regulator of protein phosphatase 1 (PP1) required for neural tube and optic fissure closure, and enteric neural crest cell (ENCCs) migration during development. Acts as an activator of PP1. During neural tube closure, localizes to the ventral neural tube and activates PP1, leading to down-regulate cell proliferation within cranial neural tissue and the neural retina. Also acts as a regulator of migration of enteric neural crest cells (ENCCs) by activating PP1, leading to repression of the integrin signaling through the rho/rock pathway. In Xenopus laevis (African clawed frog), this protein is Phosphatase and actin regulator 4-B (phactr4-b).